The primary structure comprises 393 residues: UDP-sulfoquinovose synthase (393 aa).

Residues 31–35, 74–75, arginine 100, and asparagine 118 each bind NAD(+); these read DNLST and DI. Substrate is bound at residue arginine 100. Substrate contacts are provided by threonine 144 and tyrosine 182. Threonine 144 is an active-site residue. NAD(+)-binding residues include tyrosine 182 and lysine 186. Tyrosine 182 serves as the catalytic Proton acceptor. Residue lysine 186 is part of the active site. A substrate-binding site is contributed by glutamine 209. Residue valine 212 participates in NAD(+) binding. Substrate-binding positions include 238-241, 253-255, and 326-328; these read VVNR, TVY, and RVE.

It belongs to the NAD(P)-dependent epimerase/dehydratase family. NAD(+) is required as a cofactor.

It carries out the reaction sulfite + UDP-alpha-D-glucose + H(+) = UDP-alpha-D-6-sulfoquinovose + H2O. In terms of biological role, catalyzes the biosynthesis of UDP-sulfoquinovose by the transfer of sulfite to UDP-glucose. Important for the assembly of the S-layer N-glycans. The reaction probably occurs through an NAD(+)-dependent oxidation/dehydration/enolization/sulfite addition process. In vitro, in the absence of sulfite, UDP-D-glucose is converted via UDP-4-keto-D-glucose to UDP-D-glucose-5,6-ene. The sequence is that of UDP-sulfoquinovose synthase from Sulfolobus acidocaldarius (strain ATCC 33909 / DSM 639 / JCM 8929 / NBRC 15157 / NCIMB 11770).